We begin with the raw amino-acid sequence, 218 residues long: Cytochrome c biogenesis ATP-binding export protein CcmA (218 aa).

An ABC transporter domain is found at 12–217 (LHAEQLSSIR…KLSLEYRGEV (206 aa)). 44–51 (GPNGAGKS) is a binding site for ATP.

This sequence belongs to the ABC transporter superfamily. CcmA exporter (TC 3.A.1.107) family. In terms of assembly, the complex is composed of two ATP-binding proteins (CcmA) and two transmembrane proteins (CcmB).

The protein localises to the cell inner membrane. It carries out the reaction heme b(in) + ATP + H2O = heme b(out) + ADP + phosphate + H(+). Its function is as follows. Part of the ABC transporter complex CcmAB involved in the biogenesis of c-type cytochromes; once thought to export heme, this seems not to be the case, but its exact role is uncertain. Responsible for energy coupling to the transport system. This is Cytochrome c biogenesis ATP-binding export protein CcmA from Idiomarina loihiensis (strain ATCC BAA-735 / DSM 15497 / L2-TR).